The sequence spans 540 residues: T-complex protein 1 subunit theta (540 aa).

The protein belongs to the TCP-1 chaperonin family. Heterooligomeric complex of about 850 to 900 kDa that forms two stacked rings, 12 to 16 nm in diameter.

It localises to the cytoplasm. Functionally, molecular chaperone; assists the folding of proteins upon ATP hydrolysis. Known to play a role, in vitro, in the folding of actin and tubulin. In yeast may play a role in mitotic spindle formation. This is T-complex protein 1 subunit theta (CCT8) from Candida albicans (Yeast).